A 238-amino-acid chain; its full sequence is Probable transcriptional regulatory protein IL0164 (238 aa).

This sequence belongs to the TACO1 family.

It localises to the cytoplasm. This Idiomarina loihiensis (strain ATCC BAA-735 / DSM 15497 / L2-TR) protein is Probable transcriptional regulatory protein IL0164.